The following is a 612-amino-acid chain: Dihydroxy-acid dehydratase (612 aa).

Residue D81 participates in Mg(2+) binding. Position 122 (C122) interacts with [2Fe-2S] cluster. D123 and K124 together coordinate Mg(2+). K124 bears the N6-carboxylysine mark. Residue C195 participates in [2Fe-2S] cluster binding. E491 lines the Mg(2+) pocket. Catalysis depends on S517, which acts as the Proton acceptor.

Belongs to the IlvD/Edd family. Homodimer. [2Fe-2S] cluster serves as cofactor. Mg(2+) is required as a cofactor.

The enzyme catalyses (2R)-2,3-dihydroxy-3-methylbutanoate = 3-methyl-2-oxobutanoate + H2O. The catalysed reaction is (2R,3R)-2,3-dihydroxy-3-methylpentanoate = (S)-3-methyl-2-oxopentanoate + H2O. It participates in amino-acid biosynthesis; L-isoleucine biosynthesis; L-isoleucine from 2-oxobutanoate: step 3/4. The protein operates within amino-acid biosynthesis; L-valine biosynthesis; L-valine from pyruvate: step 3/4. Functionally, functions in the biosynthesis of branched-chain amino acids. Catalyzes the dehydration of (2R,3R)-2,3-dihydroxy-3-methylpentanoate (2,3-dihydroxy-3-methylvalerate) into 2-oxo-3-methylpentanoate (2-oxo-3-methylvalerate) and of (2R)-2,3-dihydroxy-3-methylbutanoate (2,3-dihydroxyisovalerate) into 2-oxo-3-methylbutanoate (2-oxoisovalerate), the penultimate precursor to L-isoleucine and L-valine, respectively. This chain is Dihydroxy-acid dehydratase, found in Haemophilus influenzae (strain 86-028NP).